We begin with the raw amino-acid sequence, 156 residues long: Lipoprotein signal peptidase (156 aa).

The next 3 membrane-spanning stretches (helical) occupy residues Val-37–Leu-57, Phe-68–Glu-88, and Ile-95–Tyr-115. Residues Asp-120 and Asp-138 contribute to the active site. A helical membrane pass occupies residues Ala-133–Tyr-153.

This sequence belongs to the peptidase A8 family.

The protein resides in the cell inner membrane. It catalyses the reaction Release of signal peptides from bacterial membrane prolipoproteins. Hydrolyzes -Xaa-Yaa-Zaa-|-(S,diacylglyceryl)Cys-, in which Xaa is hydrophobic (preferably Leu), and Yaa (Ala or Ser) and Zaa (Gly or Ala) have small, neutral side chains.. It functions in the pathway protein modification; lipoprotein biosynthesis (signal peptide cleavage). In terms of biological role, this protein specifically catalyzes the removal of signal peptides from prolipoproteins. This Maridesulfovibrio salexigens (strain ATCC 14822 / DSM 2638 / NCIMB 8403 / VKM B-1763) (Desulfovibrio salexigens) protein is Lipoprotein signal peptidase.